Here is a 156-residue protein sequence, read N- to C-terminus: Bacterial microcompartment shell protein PduK (156 aa).

A BMC domain is found at 4–89 (SLGLLEVSGL…PGDGILSHSV (86 aa)). The disordered stretch occupies residues 81-119 (GDGILSHSVTPESESEPAPAPTPVVPHEEIPEDHAAPEA). Residues 106-116 (PHEEIPEDHAA) are compositionally biased toward basic and acidic residues.

Belongs to the bacterial microcompartments protein family. Interacts with shell protein PduA and assembly protein PduM. Interacts with PduP, probably with its first 18 residues. The cofactor is Fe cation.

It localises to the bacterial microcompartment. It functions in the pathway polyol metabolism; 1,2-propanediol degradation. Functionally, a minor shell protein of the bacterial microcompartment (BMC) dedicated to 1,2-propanediol (1,2-PD) degradation. In terms of biological role, expression of a cosmid containing the full 21-gene pdu operon in E.coli allows E.coli to grow on 1,2-propanediol (1,2-PD) with the appearance of bacterial microcompartments (BMC) in its cytoplasm. Overexpression of this protein leads to the appearance of a single large aggregate complex in the cytoplasm. Its function is as follows. The 1,2-PD-specific bacterial microcompartment (BMC) concentrates low levels of 1,2-PD catabolic enzymes, concentrates volatile reaction intermediates thus enhancing pathway flux and keeps the level of toxic, mutagenic propionaldehyde low. The chain is Bacterial microcompartment shell protein PduK from Citrobacter freundii.